Reading from the N-terminus, the 79-residue chain is Small ribosomal subunit protein bS18 (79 aa).

It belongs to the bacterial ribosomal protein bS18 family. Part of the 30S ribosomal subunit. Forms a tight heterodimer with protein bS6.

Its function is as follows. Binds as a heterodimer with protein bS6 to the central domain of the 16S rRNA, where it helps stabilize the platform of the 30S subunit. The polypeptide is Small ribosomal subunit protein bS18 (Rhodopseudomonas palustris (strain HaA2)).